We begin with the raw amino-acid sequence, 424 residues long: Phosphomethylpyrimidine synthase (424 aa).

Residues Met94, Tyr123, His162, 184–186, 225–228, and Glu264 contribute to the substrate site; these read SRG and NGMR. His268 provides a ligand contact to Zn(2+). Residue Tyr291 coordinates substrate. A Zn(2+)-binding site is contributed by His332. Positions 406, 409, and 413 each coordinate [4Fe-4S] cluster.

It belongs to the ThiC family. It depends on [4Fe-4S] cluster as a cofactor.

It carries out the reaction 5-amino-1-(5-phospho-beta-D-ribosyl)imidazole + S-adenosyl-L-methionine = 4-amino-2-methyl-5-(phosphooxymethyl)pyrimidine + CO + 5'-deoxyadenosine + formate + L-methionine + 3 H(+). The protein operates within cofactor biosynthesis; thiamine diphosphate biosynthesis. Functionally, catalyzes the synthesis of the hydroxymethylpyrimidine phosphate (HMP-P) moiety of thiamine from aminoimidazole ribotide (AIR) in a radical S-adenosyl-L-methionine (SAM)-dependent reaction. The chain is Phosphomethylpyrimidine synthase from Methanoculleus marisnigri (strain ATCC 35101 / DSM 1498 / JR1).